We begin with the raw amino-acid sequence, 232 residues long: Proteasome subunit alpha type-2 (232 aa).

Belongs to the peptidase T1A family. The 26S proteasome consists of a 20S proteasome core and two 19S regulatory subunits. The 20S proteasome core is composed of 28 subunits that are arranged in four stacked rings, resulting in a barrel-shaped structure. The two end rings are each formed by seven alpha subunits, and the two central rings are each formed by seven beta subunits. The catalytic chamber with the active sites is on the inside of the barrel.

The protein localises to the cytoplasm. It localises to the nucleus. Functionally, the proteasome is a multicatalytic proteinase complex which is characterized by its ability to cleave peptides with Arg, Phe, Tyr, Leu, and Glu adjacent to the leaving group at neutral or slightly basic pH. The proteasome has an ATP-dependent proteolytic activity. The protein is Proteasome subunit alpha type-2 (psmA2) of Dictyostelium discoideum (Social amoeba).